Consider the following 313-residue polypeptide: 2-phosphoglycerate kinase (313 aa).

Residues 8–95 enclose the ATP-cone domain; the sequence is SRILVTDKEY…LWRRVLKKHS (88 aa).

It belongs to the 2-phosphoglycerate kinase family. The cofactor is a divalent metal cation.

The catalysed reaction is (2R)-2-phosphoglycerate + ATP = (2R)-2,3-bisphosphoglycerate + ADP + H(+). It participates in thermoadapter biosynthesis; cyclic 2,3-diphosphoglycerate biosynthesis; cyclic 2,3-diphosphoglycerate from 2-phospho-D-glycerate: step 1/2. Functionally, catalyzes the phosphorylation of 2-phosphoglycerate to 2,3-diphosphoglycerate. Involved in the biosynthesis of cyclic 2,3-bisphosphoglycerate, a thermoprotectant. The protein is 2-phosphoglycerate kinase of Methanococcus maripaludis (strain C6 / ATCC BAA-1332).